We begin with the raw amino-acid sequence, 158 residues long: Transcription elongation factor GreA (158 aa).

The protein belongs to the GreA/GreB family.

Functionally, necessary for efficient RNA polymerase transcription elongation past template-encoded arresting sites. The arresting sites in DNA have the property of trapping a certain fraction of elongating RNA polymerases that pass through, resulting in locked ternary complexes. Cleavage of the nascent transcript by cleavage factors such as GreA or GreB allows the resumption of elongation from the new 3'terminus. GreA releases sequences of 2 to 3 nucleotides. The polypeptide is Transcription elongation factor GreA (Ralstonia nicotianae (strain ATCC BAA-1114 / GMI1000) (Ralstonia solanacearum)).